The primary structure comprises 183 residues: tRNA-splicing endonuclease (183 aa).

Active-site residues include tyrosine 120, histidine 128, and lysine 159.

This sequence belongs to the tRNA-intron endonuclease family. Archaeal short subfamily. In terms of assembly, homotetramer; although the tetramer contains four active sites, only two participate in the cleavage. Therefore, it should be considered as a dimer of dimers.

It carries out the reaction pretRNA = a 3'-half-tRNA molecule with a 5'-OH end + a 5'-half-tRNA molecule with a 2',3'-cyclic phosphate end + an intron with a 2',3'-cyclic phosphate and a 5'-hydroxyl terminus.. Its function is as follows. Endonuclease that removes tRNA introns. Cleaves pre-tRNA at the 5'- and 3'-splice sites to release the intron. The products are an intron and two tRNA half-molecules bearing 2',3' cyclic phosphate and 5'-OH termini. Recognizes a pseudosymmetric substrate in which 2 bulged loops of 3 bases are separated by a stem of 4 bp. In Pyrobaculum islandicum (strain DSM 4184 / JCM 9189 / GEO3), this protein is tRNA-splicing endonuclease.